Here is a 200-residue protein sequence, read N- to C-terminus: Dephospho-CoA kinase (200 aa).

One can recognise a DPCK domain in the interval 3–200 (RIGLTGGIGS…LIAEILSRVN (198 aa)). 11-16 (GSGKST) contributes to the ATP binding site.

Belongs to the CoaE family.

It localises to the cytoplasm. It catalyses the reaction 3'-dephospho-CoA + ATP = ADP + CoA + H(+). The protein operates within cofactor biosynthesis; coenzyme A biosynthesis; CoA from (R)-pantothenate: step 5/5. Its function is as follows. Catalyzes the phosphorylation of the 3'-hydroxyl group of dephosphocoenzyme A to form coenzyme A. The protein is Dephospho-CoA kinase of Corynebacterium glutamicum (strain ATCC 13032 / DSM 20300 / JCM 1318 / BCRC 11384 / CCUG 27702 / LMG 3730 / NBRC 12168 / NCIMB 10025 / NRRL B-2784 / 534).